Here is a 428-residue protein sequence, read N- to C-terminus: Histidinol dehydrogenase homolog (428 aa).

Zn(2+) contacts are provided by glutamine 250 and histidine 253. Residues glutamate 320 and histidine 321 each act as proton acceptor in the active site. Zn(2+) is bound by residues aspartate 354 and histidine 413.

It belongs to the histidinol dehydrogenase family. It depends on Zn(2+) as a cofactor.

The protein is Histidinol dehydrogenase homolog of Pelagibacter ubique (strain HTCC1062).